The chain runs to 366 residues: GTP cyclohydrolase 1 type 2 homolog (366 aa).

The a divalent metal cation site is built by histidine 64, histidine 65, aspartate 102, histidine 326, and glutamate 329.

Belongs to the GTP cyclohydrolase I type 2/NIF3 family. As to quaternary structure, homohexamer.

The polypeptide is GTP cyclohydrolase 1 type 2 homolog (Staphylococcus epidermidis (strain ATCC 12228 / FDA PCI 1200)).